A 433-amino-acid chain; its full sequence is 3-phosphoshikimate 1-carboxyvinyltransferase (433 aa).

Residues K15, S16, and R20 each coordinate 3-phosphoshikimate. Residue K15 participates in phosphoenolpyruvate binding. Phosphoenolpyruvate contacts are provided by G96 and R124. 3-phosphoshikimate contacts are provided by S169, Q171, D318, and K345. Phosphoenolpyruvate is bound at residue Q171. D318 acts as the Proton acceptor in catalysis. Positions 349 and 393 each coordinate phosphoenolpyruvate.

This sequence belongs to the EPSP synthase family. Monomer.

It localises to the cytoplasm. It carries out the reaction 3-phosphoshikimate + phosphoenolpyruvate = 5-O-(1-carboxyvinyl)-3-phosphoshikimate + phosphate. Its pathway is metabolic intermediate biosynthesis; chorismate biosynthesis; chorismate from D-erythrose 4-phosphate and phosphoenolpyruvate: step 6/7. Catalyzes the transfer of the enolpyruvyl moiety of phosphoenolpyruvate (PEP) to the 5-hydroxyl of shikimate-3-phosphate (S3P) to produce enolpyruvyl shikimate-3-phosphate and inorganic phosphate. The protein is 3-phosphoshikimate 1-carboxyvinyltransferase of Chlorobium phaeovibrioides (strain DSM 265 / 1930) (Prosthecochloris vibrioformis (strain DSM 265)).